A 301-amino-acid chain; its full sequence is Acetylglutamate kinase (301 aa).

Residues 68–69 (GG), Arg-90, and Asn-195 contribute to the substrate site.

Belongs to the acetylglutamate kinase family. ArgB subfamily.

The protein resides in the cytoplasm. It carries out the reaction N-acetyl-L-glutamate + ATP = N-acetyl-L-glutamyl 5-phosphate + ADP. Its pathway is amino-acid biosynthesis; L-arginine biosynthesis; N(2)-acetyl-L-ornithine from L-glutamate: step 2/4. In terms of biological role, catalyzes the ATP-dependent phosphorylation of N-acetyl-L-glutamate. The sequence is that of Acetylglutamate kinase from Pseudomonas putida (strain W619).